The chain runs to 510 residues: Putative cytochrome P450 cyp-13B1 (510 aa).

Cysteine 456 provides a ligand contact to heme.

It belongs to the cytochrome P450 family. The cofactor is heme.

In terms of biological role, cytochromes P450 are a group of heme-thiolate monooxygenases. They oxidize a variety of structurally unrelated compounds, including steroids, fatty acids, and xenobiotics. May play a role in the regulation of lifespan. This is Putative cytochrome P450 cyp-13B1 from Caenorhabditis elegans.